The primary structure comprises 132 residues: UPF0146 protein PF0123 (132 aa).

Belongs to the UPF0146 family.

This is UPF0146 protein PF0123 from Pyrococcus furiosus (strain ATCC 43587 / DSM 3638 / JCM 8422 / Vc1).